The following is a 113-amino-acid chain: Nucleoid-associated protein Cthe_2143 (113 aa).

It belongs to the YbaB/EbfC family. In terms of assembly, homodimer.

The protein resides in the cytoplasm. Its subcellular location is the nucleoid. Functionally, binds to DNA and alters its conformation. May be involved in regulation of gene expression, nucleoid organization and DNA protection. The chain is Nucleoid-associated protein Cthe_2143 from Acetivibrio thermocellus (strain ATCC 27405 / DSM 1237 / JCM 9322 / NBRC 103400 / NCIMB 10682 / NRRL B-4536 / VPI 7372) (Clostridium thermocellum).